Reading from the N-terminus, the 25-residue chain is Histone H4 (25 aa).

Over residues 1–14 (MSGRGKGGKGLGKG) the composition is skewed to gly residues. A disordered region spans residues 1–25 (MSGRGKGGKGLGKGGAKRHRKVLRD). Ser-2 is subject to N-acetylserine. 5 positions are modified to N6-acetyllysine: Lys-6, Lys-9, Lys-13, Lys-17, and Lys-21. Residues 15–25 (GAKRHRKVLRD) show a composition bias toward basic residues. A DNA-binding region spans residues 17-21 (KRHRK).

Belongs to the histone H4 family. The nucleosome is a histone octamer containing two molecules each of H2A, H2B, H3 and H4 assembled in one H3-H4 heterotetramer and two H2A-H2B heterodimers. The octamer wraps approximately 147 bp of DNA.

Its subcellular location is the nucleus. It localises to the chromosome. In terms of biological role, core component of nucleosome. Nucleosomes wrap and compact DNA into chromatin, limiting DNA accessibility to the cellular machineries which require DNA as a template. Histones thereby play a central role in transcription regulation, DNA repair, DNA replication and chromosomal stability. DNA accessibility is regulated via a complex set of post-translational modifications of histones, also called histone code, and nucleosome remodeling. This chain is Histone H4, found in Medicago sativa (Alfalfa).